Here is a 547-residue protein sequence, read N- to C-terminus: Alpha-humulene/(-)-(E)-beta-caryophyllene synthase (547 aa).

Residues arginine 262, aspartate 299, aspartate 303, arginine 442, and aspartate 445 each coordinate (2E,6E)-farnesyl diphosphate. Mg(2+)-binding residues include aspartate 299 and aspartate 303. Residues 299 to 303 carry the DDXXD motif motif; sequence DDMYD. Mg(2+)-binding residues include aspartate 445, aspartate 446, serine 449, and glutamate 453.

It belongs to the terpene synthase family. Tpsa subfamily. As to quaternary structure, monomer. Mg(2+) serves as cofactor. Mn(2+) is required as a cofactor. Expressed exclusively in flowers. Expressed in the flower stigmata and also detected in the mesocarp cell layers of the silique wall.

The protein resides in the cytoplasm. The catalysed reaction is (2E,6E)-farnesyl diphosphate = (-)-(E)-beta-caryophyllene + diphosphate. The enzyme catalyses (2E,6E)-farnesyl diphosphate = alpha-copaene + diphosphate. It catalyses the reaction (2E,6E)-farnesyl diphosphate = alpha-humulene + diphosphate. It carries out the reaction (2E,6E)-farnesyl diphosphate = (1S,2S,4R)-beta-elemene + diphosphate. Its pathway is secondary metabolite biosynthesis; terpenoid biosynthesis. Functionally, involved in sesquiterpene (C15) biosynthesis. The major products are beta-caryophyllene and alpha-humulene. Does not convert geranyl diphosphate (GPP) to any monoterpenes. This is Alpha-humulene/(-)-(E)-beta-caryophyllene synthase from Arabidopsis thaliana (Mouse-ear cress).